The chain runs to 668 residues: MNAIPRVALVWLLVAQVLVILPHLAYMPLWIAAMWLGCAAWRVQVFRMRAGYPRAWVKLALALLAGAGVWLSRGSLVGLDAGAVLLIAAFILKLVEMKTRRDALVLVFLGFFAVVVGYLFDDGFLAALYSLLPVTALLAALIGLQQSAFASRPWPTLRLAGGLLLQALPLMLLLFLFFPRLGPLWSLPMPGNKGVTGLSESMAPGDIAELGRSAELAFRVRFEGALPPREQLYWRALTMERFDGRRWAQAPQWSGEDALHWQKRGPELRYDVIMQPSSQPWLFALDVAQTDQTDTRLMSDFHLQRRQPVEQRLFYRVSSWPQALRESSIDPRTRWRNLQLPMHGNPRARALADELRQAHAQPQALVAALLQRFNHEPFAYTLKPPATGADGVDDFLFDTRSGFCAHYAGAMAFVLRAAGIPARVVAGYQGGELNPAGNYLLVHQFDAHAWVEYWQPEQGWLSVDPTYQVAPERIEQGLEQALAGDSEYLADAPLSPLRYRGLPWLNDMRLAWDSLNYGWQRWVLAYQGEQQGAFLQRWFGGLDPTRLGLLLGAAAILSVGLLALFLLKPWQGRGDLRSRQLRRFERLLEMHGLRRSPGEGLRSYGERAARVLPAQAPAIAAFVGAFEAQRYGHGGADDPGLRLRALRRALPWRLVRTPTRDGRGEEQA.

At 1-6 (MNAIPR) the chain is on the cytoplasmic side. Residues 7–27 (VALVWLLVAQVLVILPHLAYM) traverse the membrane as a helical segment. At 28–50 (PLWIAAMWLGCAAWRVQVFRMRA) the chain is on the periplasmic side. The chain crosses the membrane as a helical span at residues 51–71 (GYPRAWVKLALALLAGAGVWL). The Cytoplasmic portion of the chain corresponds to 72–74 (SRG). The helical transmembrane segment at 75–95 (SLVGLDAGAVLLIAAFILKLV) threads the bilayer. Residues 96-103 (EMKTRRDA) lie on the Periplasmic side of the membrane. The next 2 membrane-spanning stretches (helical) occupy residues 104-124 (LVLV…DDGF) and 125-145 (LAAL…IGLQ). Residues 146 to 158 (QSAFASRPWPTLR) are Cytoplasmic-facing. Residues 159-179 (LAGGLLLQALPLMLLLFLFFP) form a helical membrane-spanning segment. Residues 180–548 (RLGPLWSLPM…FGGLDPTRLG (369 aa)) lie on the Periplasmic side of the membrane. C404 acts as the Nucleophile in catalysis. Catalysis depends on residues H448 and D464. Residues 549-569 (LLLGAAAILSVGLLALFLLKP) form a helical membrane-spanning segment. Topologically, residues 570 to 668 (WQGRGDLRSR…TRDGRGEEQA (99 aa)) are cytoplasmic.

This sequence belongs to the transglutaminase-like superfamily.

It localises to the cell inner membrane. The catalysed reaction is L-glutaminyl-[protein] + L-lysyl-[protein] = [protein]-L-lysyl-N(6)-5-L-glutamyl-[protein] + NH4(+). In terms of biological role, displays transglutaminase activity (TGase) in vitro. Plays a critical role in the viability of P.aeruginosa. Might contribute to an essential function linked to the cell wall. The protein is Protein-glutamine gamma-glutamyltransferase (tgpA) of Pseudomonas aeruginosa (strain ATCC 15692 / DSM 22644 / CIP 104116 / JCM 14847 / LMG 12228 / 1C / PRS 101 / PAO1).